A 297-amino-acid chain; its full sequence is uncharacterized protein (297 aa).

Helical transmembrane passes span 14 to 34, 55 to 75, 81 to 101, 110 to 130, 135 to 155, 163 to 183, and 208 to 228; these read LFLM…FLKF, LLLG…IYFF, FYFG…AGAL, AIIL…RVAF, LSTL…KLLF, IVGA…YGSI, and LIMT…SKCF.

It is found in the cell membrane. This is an uncharacterized protein from Methanocaldococcus jannaschii (strain ATCC 43067 / DSM 2661 / JAL-1 / JCM 10045 / NBRC 100440) (Methanococcus jannaschii).